The primary structure comprises 229 residues: Large ribosomal subunit protein uL1 (229 aa).

It belongs to the universal ribosomal protein uL1 family. In terms of assembly, part of the 50S ribosomal subunit.

Functionally, binds directly to 23S rRNA. The L1 stalk is quite mobile in the ribosome, and is involved in E site tRNA release. Its function is as follows. Protein L1 is also a translational repressor protein, it controls the translation of the L11 operon by binding to its mRNA. In Streptococcus sanguinis (strain SK36), this protein is Large ribosomal subunit protein uL1.